Here is a 127-residue protein sequence, read N- to C-terminus: Apolipoprotein C-IV (127 aa).

An N-terminal signal peptide occupies residues 1-27 (MSLLRNRLQDLPALCLCVLVLACIGAC).

It belongs to the apolipoprotein C4 family.

It is found in the secreted. Functionally, may participate in lipoprotein metabolism. This Papio hamadryas (Hamadryas baboon) protein is Apolipoprotein C-IV (APOC4).